A 414-amino-acid polypeptide reads, in one-letter code: Probable acetyl-CoA acetyltransferase (414 aa).

C110 functions as the Acyl-thioester intermediate in the catalytic mechanism. CoA contacts are provided by residues Y205, 244-246 (KVL), and K249. Y205 contacts K(+). Positions 266 and 268 each coordinate K(+). Residue S269 participates in CoA binding. V366 contacts K(+). Active-site proton acceptor residues include H370 and C400.

It belongs to the thiolase-like superfamily. Thiolase family.

It catalyses the reaction 2 acetyl-CoA = acetoacetyl-CoA + CoA. This Dictyostelium discoideum (Social amoeba) protein is Probable acetyl-CoA acetyltransferase.